Here is an 816-residue protein sequence, read N- to C-terminus: Probable E3 ubiquitin-protein ligase hulA (816 aa).

Positions 1-112 (MGSNLPAQPN…QMGGDEMLTR (112 aa)) constitute a C2 domain. Disordered regions lie at residues 134 to 238 (NLST…WERR) and 253 to 353 (RTTT…YFVD). 4 stretches are compositionally biased toward polar residues: residues 151–168 (MQPS…ASTP), 177–202 (ADPT…STIV), 217–226 (SRTNLSSFED), and 253–270 (RTTT…QTSR). The region spanning 229–262 (GRLPAGWERREDNLGRTYYVDHNTRTTTWTRPSN) is the WW 1 domain. Residues 279–294 (LERRAHQSRMLPEDRT) show a composition bias toward basic and acidic residues. Residues 295-309 (GASSPNLQENQQQAQ) show a composition bias toward polar residues. Positions 310–333 (TPPAGGSASAVSMMATGATTAGTG) are enriched in low complexity. WW domains are found at residues 333–366 (GELP…DPRR) and 393–426 (GPLP…DPRL). An HECT domain is found at 482–816 (SASDLKKRLM…VEETLGFGQE (335 aa)). Cys784 (glycyl thioester intermediate) is an active-site residue.

It belongs to the RSP5/NEDD4 family. Interacts with creD.

The protein resides in the cytoplasm. It carries out the reaction S-ubiquitinyl-[E2 ubiquitin-conjugating enzyme]-L-cysteine + [acceptor protein]-L-lysine = [E2 ubiquitin-conjugating enzyme]-L-cysteine + N(6)-ubiquitinyl-[acceptor protein]-L-lysine.. The protein operates within protein modification; protein ubiquitination. In terms of biological role, E3 ubiquitin-protein ligase which accepts ubiquitin from an E2 ubiquitin-conjugating enzyme in the form of a thioester and then directly transfers the ubiquitin to targeted substrates. Probably involved in the regulatory network controlling carbon source utilization. This chain is Probable E3 ubiquitin-protein ligase hulA (hulA), found in Aspergillus oryzae (strain ATCC 42149 / RIB 40) (Yellow koji mold).